Consider the following 382-residue polypeptide: D-galactonate dehydratase (382 aa).

Asp183 serves as a coordination point for Mg(2+). His185 functions as the Proton donor in the catalytic mechanism. Mg(2+)-binding residues include Glu209 and Glu235. Catalysis depends on His285, which acts as the Proton acceptor.

This sequence belongs to the mandelate racemase/muconate lactonizing enzyme family. GalD subfamily. It depends on Mg(2+) as a cofactor.

The enzyme catalyses D-galactonate = 2-dehydro-3-deoxy-D-galactonate + H2O. Its pathway is carbohydrate acid metabolism; D-galactonate degradation; D-glyceraldehyde 3-phosphate and pyruvate from D-galactonate: step 1/3. In terms of biological role, catalyzes the dehydration of D-galactonate to 2-keto-3-deoxy-D-galactonate. In Variovorax paradoxus (strain S110), this protein is D-galactonate dehydratase.